The chain runs to 50 residues: Defensin D1 (50 aa).

Disulfide bonds link C3–C50, C14–C35, C20–C44, and C24–C46.

Contains 4 disulfide bonds.

Its subcellular location is the secreted. Its function is as follows. Antimicrobial peptide active against fungi, Gram-positive and Gram-negative bacteria. Inhibits growth of hyphae in the fungi A.niger (IC(50)=3.5 ug/ml), B.sorokiniana (IC(50)=3.0 ug/ml), F.oxysporum (IC(50)=9.5 ug/ml), F.graminearum (IC(50)=6.9 ug/ml), F.culmorum (IC(50)=6.9 ug/ml) and B.cinerea (IC(50)=27.4 ug/ml). Has no effect on spore germination. Destroys spores in germinated conidia by disruption of cell walls and membranes in A.niger and B.sorokiniana. Causes vacuolization of germinated macro- and microconidia in F.oxysporum, F.graminearum and F.culmorum. Strongly inhibits growth of P.infestans on potato tubers above concentrations of 13.6 ug/ml. Inhibits growth of Gram-positive bacteria C.michiganensis and B.subtilis and of Gram-negative bacteria P.syringae, E.carotovora and E.coli. This is Defensin D1 from Nigella sativa (Black cumin).